The primary structure comprises 109 residues: Urease subunit gamma (109 aa).

It belongs to the urease gamma subunit family. In terms of assembly, heterotrimer of UreA (gamma), UreB (beta) and UreC (alpha) subunits. Three heterotrimers associate to form the active enzyme.

It localises to the cytoplasm. It carries out the reaction urea + 2 H2O + H(+) = hydrogencarbonate + 2 NH4(+). The protein operates within nitrogen metabolism; urea degradation; CO(2) and NH(3) from urea (urease route): step 1/1. The protein is Urease subunit gamma of Natronomonas pharaonis (strain ATCC 35678 / DSM 2160 / CIP 103997 / JCM 8858 / NBRC 14720 / NCIMB 2260 / Gabara) (Halobacterium pharaonis).